Reading from the N-terminus, the 510-residue chain is Archaeal glutamate synthase [NADPH] (510 aa).

4Fe-4S ferredoxin-type domains follow at residues 10–37 and 38–68; these read YKVEVDPNRCMLCERCTIECSWGVYRRE and GDRIISYSNRCGACHRCVVMCPRDAITIKEN. [4Fe-4S] cluster-binding residues include Cys-19, Cys-22, Cys-25, Cys-29, Cys-48, Cys-51, Cys-54, and Cys-58.

Belongs to the glutamate synthase family. The cofactor is FMN.

The enzyme catalyses 2 L-glutamate + NADP(+) = L-glutamine + 2-oxoglutarate + NADPH + H(+). The polypeptide is Archaeal glutamate synthase [NADPH] (Methanocaldococcus jannaschii (strain ATCC 43067 / DSM 2661 / JAL-1 / JCM 10045 / NBRC 100440) (Methanococcus jannaschii)).